A 369-amino-acid polypeptide reads, in one-letter code: Phenylalanine--tRNA ligase alpha subunit (369 aa).

E269 provides a ligand contact to Mg(2+).

Belongs to the class-II aminoacyl-tRNA synthetase family. Phe-tRNA synthetase alpha subunit type 1 subfamily. In terms of assembly, tetramer of two alpha and two beta subunits. Requires Mg(2+) as cofactor.

It is found in the cytoplasm. It carries out the reaction tRNA(Phe) + L-phenylalanine + ATP = L-phenylalanyl-tRNA(Phe) + AMP + diphosphate + H(+). The protein is Phenylalanine--tRNA ligase alpha subunit of Brucella anthropi (strain ATCC 49188 / DSM 6882 / CCUG 24695 / JCM 21032 / LMG 3331 / NBRC 15819 / NCTC 12168 / Alc 37) (Ochrobactrum anthropi).